Reading from the N-terminus, the 376-residue chain is Erythronate-4-phosphate dehydrogenase (376 aa).

Substrate contacts are provided by Ser45 and Thr67. Asp147 contacts NAD(+). The active site involves Arg209. NAD(+) is bound at residue Asp233. Residue Glu238 is part of the active site. Catalysis depends on His255, which acts as the Proton donor. Gly258 contributes to the NAD(+) binding site. Position 259 (Tyr259) interacts with substrate.

This sequence belongs to the D-isomer specific 2-hydroxyacid dehydrogenase family. PdxB subfamily. In terms of assembly, homodimer.

It localises to the cytoplasm. The catalysed reaction is 4-phospho-D-erythronate + NAD(+) = (R)-3-hydroxy-2-oxo-4-phosphooxybutanoate + NADH + H(+). It participates in cofactor biosynthesis; pyridoxine 5'-phosphate biosynthesis; pyridoxine 5'-phosphate from D-erythrose 4-phosphate: step 2/5. Catalyzes the oxidation of erythronate-4-phosphate to 3-hydroxy-2-oxo-4-phosphonooxybutanoate. This chain is Erythronate-4-phosphate dehydrogenase, found in Shewanella sp. (strain ANA-3).